The following is a 1007-amino-acid chain: Sal-like protein 2 (1007 aa).

The disordered stretch occupies residues 1–33; it reads MSRRKQRKPQQLISDCEGPSASENGDASEEDHP. The C2H2-type 1; atypical zinc-finger motif lies at 34–56; sequence QVCAKCCAQFTDPTEFLAHQNAC. 4 disordered regions span residues 59–121, 137–177, 220–243, and 286–306; these read DPPV…GEES, GGGL…SGHL, PASP…PLFS, and PFSA…SPAL. The span at 70 to 80 shows a compositional bias: low complexity; the sequence is ENPNNSSASSE. Positions 99–108 are enriched in polar residues; it reads PPDSGSSVPT. Pro residues predominate over residues 151–171; the sequence is PLPPESTPAPPPPPPPPPPPG. Ser-243 carries the post-translational modification Phosphoserine. C2H2-type zinc fingers lie at residues 373-395 and 401-423; these read HKCR…LRSH and YKCN…FHRH. Disordered regions lie at residues 520–540 and 610–629; these read KNKA…SGVA and AASG…ASSG. 3 consecutive C2H2-type zinc fingers follow at residues 631–653, 659–681, and 691–713; these read NQCV…YGQH, FKCK…FVGH, and NSCP…VRMH. The tract at residues 714–886 is disordered; sequence LGGQIPNGGT…SALTPEGEAT (173 aa). The segment covering 734–744 has biased composition (polar residues); the sequence is ENGSEQSTVSG. A compositionally biased stretch (low complexity) spans 747 to 757; that stretch reads SFPQQQSQQPS. The span at 758-782 shows a compositional bias: acidic residues; that stretch reads PEEELSEEEEEEDEEEEEDVTDEDS. A phosphoserine mark is found at Ser-797, Ser-802, and Ser-806. The span at 803-812 shows a compositional bias: acidic residues; sequence EEASGAEEEV. Basic and acidic residues predominate over residues 862-871; that stretch reads GKEEGGKPER. Lys-911 is covalently cross-linked (Glycyl lysine isopeptide (Lys-Gly) (interchain with G-Cter in ubiquitin)). 2 C2H2-type zinc fingers span residues 911–933 and 940–963; these read KACE…QKTH and FTCV…LLAH.

This sequence belongs to the sal C2H2-type zinc-finger protein family. Highest levels in adult brain (in different areas). Lower levels in heart; very low levels in kidney and pancreas. Expressed throughout the retina and lens vesicle as well as the periocular mesenchyme.

The protein resides in the nucleus. Probable transcription factor that plays a role in eye development before, during, and after optic fissure closure. This chain is Sal-like protein 2 (SALL2), found in Homo sapiens (Human).